A 292-amino-acid chain; its full sequence is Syntaxin-19 (292 aa).

Residues Met1–Pro24 show a composition bias toward basic and acidic residues. The interval Met1–Ala28 is disordered. Residues Val46–Glu122 are a coiled coil. The t-SNARE coiled-coil homology domain maps to Leu209–Ala271.

This sequence belongs to the syntaxin family. Interacts with EGFR.

It localises to the cell membrane. Its subcellular location is the cytoplasm. Plays a role in endosomal trafficking of the epidermal growth factor receptor (EGFR). The polypeptide is Syntaxin-19 (STX19) (Bos taurus (Bovine)).